Reading from the N-terminus, the 77-residue chain is Dermaseptin-B9 (77 aa).

The first 22 residues, 1–22 (MAFLKKSLFLVLFLGLVSLSVC), serve as a signal peptide directing secretion. 2 consecutive propeptides follow at residues 23 to 43 (EEEK…QSEE) and 76 to 77 (EQ).

Belongs to the frog skin active peptide (FSAP) family. Dermaseptin subfamily. Expressed by the skin glands.

The protein resides in the secreted. Functionally, has antimicrobial activity. Exhibits a bactericidal activity towards several species of mollicutes, firmicutes and gracilicutes. This peptide is membranotropic and it efficiently depolarizes the plasma membrane. The polypeptide is Dermaseptin-B9 (DRG3) (Phyllomedusa bicolor (Two-colored leaf frog)).